A 1344-amino-acid polypeptide reads, in one-letter code: Myb-binding protein 1A (1344 aa).

The segment at 1 to 24 (MAEMKSPTKAEPATPAEAAQSDRH) is disordered. Alanine 2 is modified (N-acetylalanine). The segment at 2 to 580 (AEMKSPTKAE…WDQMMSTLKE (579 aa)) is interaction with MYB. Residues 7-19 (PTKAEPATPAEAA) are compositionally biased toward low complexity. N6-acetyllysine is present on residues lysine 69 and lysine 156. 2 consecutive short sequence motifs (nuclear export signal) follow at residues 238–256 (SEDN…ANSV) and 261–279 (KLPN…ESRF). 2 disordered regions span residues 710–751 (DEKQ…DKDV) and 1146–1344 (QRPK…VQTP). The span at 732–747 (SDMDSEDGEESEEEDR) shows a compositional bias: acidic residues. Residues 1148 to 1159 (PKSEKKNAKDIP) are compositionally biased toward basic and acidic residues. A Glycyl lysine isopeptide (Lys-Gly) (interchain with G-Cter in SUMO2) cross-link involves residue lysine 1149. Residues 1152-1344 (KKNAKDIPSD…RVASRRVQTP (193 aa)) are required for nuclear and nucleolar localization. Serine 1160 and serine 1164 each carry phosphoserine. Over residues 1168-1185 (TKRKKKGFLPETKKRKKL) the composition is skewed to basic residues. Serine 1187 is subject to Phosphoserine. Residues 1188–1202 (EGTTPEKNAASQQDA) show a composition bias toward polar residues. The residue at position 1191 (threonine 1191) is a Phosphothreonine. Phosphoserine occurs at positions 1219 and 1244. Over residues 1249–1258 (NPTLSPSTPA) the composition is skewed to polar residues. Threonine 1251 is modified (phosphothreonine). Position 1253 is a phosphoserine (serine 1253). Residues threonine 1256 and threonine 1277 each carry the phosphothreonine modification. 3 positions are modified to phosphoserine: serine 1280, serine 1303, and serine 1318. Over residues 1317-1329 (LSLVSRSPSLLQS) the composition is skewed to low complexity. Residue arginine 1322 is modified to Citrulline. 3 positions are modified to phosphoserine: serine 1323, serine 1325, and serine 1329.

It belongs to the MYBBP1A family. As to quaternary structure, component of the B-WICH complex, at least composed of SMARCA5/SNF2H, BAZ1B/WSTF, SF3B1, DEK, MYO1C, ERCC6, MYBBP1A and DDX21. Binds to and represses JUN and MYB via the leucine zipper regions present in these proteins. Also binds to and represses PPARGC1A: this interaction is abrogated when PPARGC1A is phosphorylated by MAPK1/ERK. Binds to and stimulates transcription by AHR. Binds to KPNA2. Interacts with CLOCK and CRY1. Post-translationally, citrullinated by PADI4. In terms of tissue distribution, ubiquitously expressed.

The protein localises to the nucleus. It is found in the nucleolus. Its subcellular location is the cytoplasm. Its function is as follows. May activate or repress transcription via interactions with sequence specific DNA-binding proteins. Repression may be mediated at least in part by histone deacetylase activity (HDAC activity). Acts as a corepressor and in concert with CRY1, represses the transcription of the core circadian clock component PER2. Preferentially binds to dimethylated histone H3 'Lys-9' (H3K9me2) on the PER2 promoter. Has a role in rRNA biogenesis together with PWP1. In Mus musculus (Mouse), this protein is Myb-binding protein 1A (Mybbp1a).